The sequence spans 90 residues: Acylphosphatase (90 aa).

One can recognise an Acylphosphatase-like domain in the interval 5–90 (SFVVRVWGLV…PPKGSGFHTN (86 aa)). Residues Arg-20 and Asn-38 contribute to the active site.

Belongs to the acylphosphatase family.

The catalysed reaction is an acyl phosphate + H2O = a carboxylate + phosphate + H(+). The chain is Acylphosphatase (acyP) from Aeromonas hydrophila subsp. hydrophila (strain ATCC 7966 / DSM 30187 / BCRC 13018 / CCUG 14551 / JCM 1027 / KCTC 2358 / NCIMB 9240 / NCTC 8049).